Consider the following 183-residue polypeptide: Large ribosomal subunit protein uL10 (183 aa).

It belongs to the universal ribosomal protein uL10 family. In terms of assembly, part of the ribosomal stalk of the 50S ribosomal subunit. The N-terminus interacts with L11 and the large rRNA to form the base of the stalk. The C-terminus forms an elongated spine to which L12 dimers bind in a sequential fashion forming a multimeric L10(L12)X complex.

Its function is as follows. Forms part of the ribosomal stalk, playing a central role in the interaction of the ribosome with GTP-bound translation factors. The protein is Large ribosomal subunit protein uL10 of Mesomycoplasma hyopneumoniae (strain 232) (Mycoplasma hyopneumoniae).